A 454-amino-acid chain; its full sequence is tRNA modification GTPase MnmE (454 aa).

(6S)-5-formyl-5,6,7,8-tetrahydrofolate is bound by residues Arg23, Glu80, and Lys120. In terms of domain architecture, TrmE-type G spans 216-377; the sequence is GMKVVIAGRP…LRDHLKSSMG (162 aa). Asn226 serves as a coordination point for K(+). GTP contacts are provided by residues 226–231, 245–251, 270–273, 335–338, and 358–360; these read NAGKSS, TDIAGTT, DTAG, NKAD, and SAR. Ser230 is a Mg(2+) binding site. Residues Thr245, Ile247, and Thr250 each contribute to the K(+) site. Mg(2+) is bound at residue Thr251. Lys454 is a (6S)-5-formyl-5,6,7,8-tetrahydrofolate binding site.

This sequence belongs to the TRAFAC class TrmE-Era-EngA-EngB-Septin-like GTPase superfamily. TrmE GTPase family. As to quaternary structure, homodimer. Heterotetramer of two MnmE and two MnmG subunits. K(+) is required as a cofactor.

Its subcellular location is the cytoplasm. Exhibits a very high intrinsic GTPase hydrolysis rate. Involved in the addition of a carboxymethylaminomethyl (cmnm) group at the wobble position (U34) of certain tRNAs, forming tRNA-cmnm(5)s(2)U34. The chain is tRNA modification GTPase MnmE from Erwinia tasmaniensis (strain DSM 17950 / CFBP 7177 / CIP 109463 / NCPPB 4357 / Et1/99).